We begin with the raw amino-acid sequence, 208 residues long: UPF0637 protein BCG9842_B1177 (208 aa).

It belongs to the UPF0637 family.

The polypeptide is UPF0637 protein BCG9842_B1177 (Bacillus cereus (strain G9842)).